We begin with the raw amino-acid sequence, 200 residues long: 3-isopropylmalate dehydratase small subunit (200 aa).

It belongs to the LeuD family. LeuD type 1 subfamily. In terms of assembly, heterodimer of LeuC and LeuD.

It carries out the reaction (2R,3S)-3-isopropylmalate = (2S)-2-isopropylmalate. It functions in the pathway amino-acid biosynthesis; L-leucine biosynthesis; L-leucine from 3-methyl-2-oxobutanoate: step 2/4. Its function is as follows. Catalyzes the isomerization between 2-isopropylmalate and 3-isopropylmalate, via the formation of 2-isopropylmaleate. The polypeptide is 3-isopropylmalate dehydratase small subunit (Photobacterium profundum (strain SS9)).